A 357-amino-acid polypeptide reads, in one-letter code: 3-dehydroquinate synthase (357 aa).

Residues 69-74 (DGEQFK), 103-107 (GVVGD), 127-128 (TT), Lys-140, Lys-149, and 167-170 (CLQT) contribute to the NAD(+) site. Glu-182, His-245, and His-262 together coordinate Zn(2+).

The protein belongs to the sugar phosphate cyclases superfamily. Dehydroquinate synthase family. It depends on Co(2+) as a cofactor. Zn(2+) is required as a cofactor. NAD(+) serves as cofactor.

It is found in the cytoplasm. It catalyses the reaction 7-phospho-2-dehydro-3-deoxy-D-arabino-heptonate = 3-dehydroquinate + phosphate. The protein operates within metabolic intermediate biosynthesis; chorismate biosynthesis; chorismate from D-erythrose 4-phosphate and phosphoenolpyruvate: step 2/7. In terms of biological role, catalyzes the conversion of 3-deoxy-D-arabino-heptulosonate 7-phosphate (DAHP) to dehydroquinate (DHQ). The sequence is that of 3-dehydroquinate synthase from Idiomarina loihiensis (strain ATCC BAA-735 / DSM 15497 / L2-TR).